We begin with the raw amino-acid sequence, 341 residues long: MTDHALLLVNLGSPASTSVADVRRYLNQFLMDPYVIDLPWPVRRLLVSLILIKRPEQSAHAYASIWWDEGSPLVVLSRRLQQQMKAQWTHGPVELAMRYGEPSIETNLLKLVAAGHKRITLAPLYPQFADSTTTTVIEEAKRVVREKKLDVQLSVLQPFYDQPEYLDALVASARPHLQQDYDHLLLSFHGLPERHLTKLDPTGNHCFKNEDCCKNASAAVLATCYRAQCLRTAALFAERMGLPDGKWSVSFQSRLGRAKWIEPYTEARLDELAKSGVKKILVMCPAFVADCIETLEEIGDRGKEQFREAGGEELVLVPCLNDDPQWAKALATLCERAPLAL.

Residues His189 and Glu293 each coordinate Fe cation.

It belongs to the ferrochelatase family.

Its subcellular location is the cytoplasm. The catalysed reaction is heme b + 2 H(+) = protoporphyrin IX + Fe(2+). The protein operates within porphyrin-containing compound metabolism; protoheme biosynthesis; protoheme from protoporphyrin-IX: step 1/1. Its function is as follows. Catalyzes the ferrous insertion into protoporphyrin IX. This Pseudomonas fluorescens (strain Pf0-1) protein is Ferrochelatase.